The sequence spans 405 residues: Arginine deiminase (405 aa).

Cysteine 395 functions as the Amidino-cysteine intermediate in the catalytic mechanism.

The protein belongs to the arginine deiminase family.

Its subcellular location is the cytoplasm. The catalysed reaction is L-arginine + H2O = L-citrulline + NH4(+). It participates in amino-acid degradation; L-arginine degradation via ADI pathway; carbamoyl phosphate from L-arginine: step 1/2. This Rhodococcus opacus (strain B4) protein is Arginine deiminase.